The sequence spans 427 residues: Glutamyl-tRNA(Gln) amidotransferase subunit D (427 aa).

One can recognise an Asparaginase/glutaminase domain in the interval 74–407 (ERVYIIGAGG…EVVRKMFQRN (334 aa)). Active-site residues include Thr-84, Thr-160, Asp-161, and Lys-240.

Belongs to the asparaginase 1 family. GatD subfamily. As to quaternary structure, heterodimer of GatD and GatE.

It carries out the reaction L-glutamyl-tRNA(Gln) + L-glutamine + ATP + H2O = L-glutaminyl-tRNA(Gln) + L-glutamate + ADP + phosphate + H(+). Allows the formation of correctly charged Gln-tRNA(Gln) through the transamidation of misacylated Glu-tRNA(Gln) in organisms which lack glutaminyl-tRNA synthetase. The reaction takes place in the presence of glutamine and ATP through an activated gamma-phospho-Glu-tRNA(Gln). The GatDE system is specific for glutamate and does not act on aspartate. This Aeropyrum pernix (strain ATCC 700893 / DSM 11879 / JCM 9820 / NBRC 100138 / K1) protein is Glutamyl-tRNA(Gln) amidotransferase subunit D.